A 253-amino-acid chain; its full sequence is Triosephosphate isomerase (253 aa).

8-10 (NWK) lines the substrate pocket. The active-site Electrophile is His-93. Glu-165 (proton acceptor) is an active-site residue. Residues Gly-171, Ser-210, and 231 to 232 (GG) contribute to the substrate site.

This sequence belongs to the triosephosphate isomerase family. As to quaternary structure, homodimer.

The protein localises to the cytoplasm. The catalysed reaction is D-glyceraldehyde 3-phosphate = dihydroxyacetone phosphate. It participates in carbohydrate biosynthesis; gluconeogenesis. Its pathway is carbohydrate degradation; glycolysis; D-glyceraldehyde 3-phosphate from glycerone phosphate: step 1/1. Functionally, involved in the gluconeogenesis. Catalyzes stereospecifically the conversion of dihydroxyacetone phosphate (DHAP) to D-glyceraldehyde-3-phosphate (G3P). The sequence is that of Triosephosphate isomerase from Francisella tularensis subsp. holarctica (strain FTNF002-00 / FTA).